Consider the following 382-residue polypeptide: Sulfate adenylyltransferase (382 aa).

Belongs to the sulfate adenylyltransferase family.

It catalyses the reaction sulfate + ATP + H(+) = adenosine 5'-phosphosulfate + diphosphate. It functions in the pathway sulfur metabolism; hydrogen sulfide biosynthesis; sulfite from sulfate: step 1/3. The polypeptide is Sulfate adenylyltransferase (Ignicoccus hospitalis (strain KIN4/I / DSM 18386 / JCM 14125)).